The sequence spans 289 residues: ATP synthase gamma chain (289 aa).

The protein belongs to the ATPase gamma chain family. In terms of assembly, F-type ATPases have 2 components, CF(1) - the catalytic core - and CF(0) - the membrane proton channel. CF(1) has five subunits: alpha(3), beta(3), gamma(1), delta(1), epsilon(1). CF(0) has three main subunits: a, b and c.

It is found in the cell inner membrane. Produces ATP from ADP in the presence of a proton gradient across the membrane. The gamma chain is believed to be important in regulating ATPase activity and the flow of protons through the CF(0) complex. The polypeptide is ATP synthase gamma chain (Azobacteroides pseudotrichonymphae genomovar. CFP2).